The primary structure comprises 333 residues: Probable tRNA-dihydrouridine synthase 1 (333 aa).

FMN contacts are provided by residues 17 to 19 (PMA) and Gln-71. Cys-102 (proton donor) is an active-site residue. FMN contacts are provided by residues Lys-141, 202–204 (NGD), and 226–227 (GR).

It belongs to the Dus family. It depends on FMN as a cofactor.

The catalysed reaction is a 5,6-dihydrouridine in tRNA + NAD(+) = a uridine in tRNA + NADH + H(+). It carries out the reaction a 5,6-dihydrouridine in tRNA + NADP(+) = a uridine in tRNA + NADPH + H(+). Its function is as follows. Catalyzes the synthesis of 5,6-dihydrouridine (D), a modified base found in the D-loop of most tRNAs, via the reduction of the C5-C6 double bond in target uridines. This Bacillus subtilis (strain 168) protein is Probable tRNA-dihydrouridine synthase 1 (dus1).